Reading from the N-terminus, the 901-residue chain is Probable dipeptidyl-aminopeptidase B (901 aa).

The span at 1-22 (MSSPRPSTSSTSSDSGLSVDTT) shows a compositional bias: low complexity. The segment at 1–67 (MSSPRPSTSS…EPFLPSAKKQ (67 aa)) is disordered. Residues 1-76 (MSSPRPSTSS…QAASGSRTSR (76 aa)) are Cytoplasmic-facing. The chain crosses the membrane as a helical; Signal-anchor for type II membrane protein span at residues 77–97 (LIWGLVILCVAGWLWGLVLFV). Over 98 to 901 (TQNRSAQQSV…VKRSLPMLVK (804 aa)) the chain is Vacuolar. N334 and N625 each carry an N-linked (GlcNAc...) asparagine glycan. S739 functions as the Charge relay system in the catalytic mechanism. The N-linked (GlcNAc...) asparagine glycan is linked to N793. Active-site charge relay system residues include D816 and H849.

It belongs to the peptidase S9B family.

The protein resides in the vacuole membrane. It carries out the reaction Release of an N-terminal dipeptide, Xaa-Yaa-|-Zaa-, from a polypeptide, preferentially when Yaa is Pro, provided Zaa is neither Pro nor hydroxyproline.. In terms of biological role, type IV dipeptidyl-peptidase which removes N-terminal dipeptides sequentially from polypeptides having unsubstituted N-termini provided that the penultimate residue is proline. This chain is Probable dipeptidyl-aminopeptidase B (dapB), found in Aspergillus niger (strain ATCC MYA-4892 / CBS 513.88 / FGSC A1513).